The chain runs to 122 residues: Large ribosomal subunit protein uL14 (122 aa).

It belongs to the universal ribosomal protein uL14 family. In terms of assembly, part of the 50S ribosomal subunit. Forms a cluster with proteins L3 and L19. In the 70S ribosome, L14 and L19 interact and together make contacts with the 16S rRNA in bridges B5 and B8.

Functionally, binds to 23S rRNA. Forms part of two intersubunit bridges in the 70S ribosome. The sequence is that of Large ribosomal subunit protein uL14 from Synechococcus sp. (strain JA-2-3B'a(2-13)) (Cyanobacteria bacterium Yellowstone B-Prime).